The sequence spans 394 residues: Actin-related protein 2 (394 aa).

N-acetylmethionine is present on Met-1. ATP-binding positions include 160–162 (GDG) and 214–218 (RMIKE). An N6-acetyllysine modification is found at Lys-299. 305 to 310 (GGSTMY) provides a ligand contact to ATP. Residue Lys-322 is modified to N6-acetyllysine.

This sequence belongs to the actin family. ARP2 subfamily. As to quaternary structure, component of the Arp2/3 complex composed of ACTR2/ARP2, ACTR3/ARP3, ARPC1B/p41-ARC, ARPC2/p34-ARC, ARPC3/p21-ARC, ARPC4/p20-ARC and ARPC5/p16-ARC. Interacts with AVIL.

The protein resides in the cytoplasm. The protein localises to the cytoskeleton. It is found in the cell projection. It localises to the nucleus. Its function is as follows. ATP-binding component of the Arp2/3 complex, a multiprotein complex that mediates actin polymerization upon stimulation by nucleation-promoting factor (NPF). The Arp2/3 complex mediates the formation of branched actin networks in the cytoplasm, providing the force for cell motility. Seems to contact the pointed end of the daughter actin filament. In podocytes, required for the formation of lamellipodia downstream of AVIL and PLCE1 regulation. In addition to its role in the cytoplasmic cytoskeleton, the Arp2/3 complex also promotes actin polymerization in the nucleus, thereby regulating gene transcription and repair of damaged DNA. The Arp2/3 complex promotes homologous recombination (HR) repair in response to DNA damage by promoting nuclear actin polymerization, leading to drive motility of double-strand breaks (DSBs). The chain is Actin-related protein 2 (ACTR2) from Pongo abelii (Sumatran orangutan).